A 318-amino-acid polypeptide reads, in one-letter code: Ferrochelatase (318 aa).

His-194 and Glu-275 together coordinate Fe cation.

The protein belongs to the ferrochelatase family.

It is found in the cytoplasm. It catalyses the reaction heme b + 2 H(+) = protoporphyrin IX + Fe(2+). Its pathway is porphyrin-containing compound metabolism; protoheme biosynthesis; protoheme from protoporphyrin-IX: step 1/1. Its function is as follows. Catalyzes the ferrous insertion into protoporphyrin IX. This is Ferrochelatase from Xanthomonas axonopodis pv. citri (strain 306).